A 173-amino-acid chain; its full sequence is DELTA-actitoxin-Oor1b (173 aa).

The interval 6–25 (GAALGFNVHQTVLKALGQVS) is N-terminal region. Phosphocholine is bound by residues serine 49, valine 82, serine 100, proline 102, tyrosine 128, and tyrosine 133. The tract at residues 100 to 115 (SVPFDYNLYSNWWDVK) is trp-rich region, which is important for the binding to lipid membrane.

The protein belongs to the actinoporin family. Sea anemone subfamily. Octamer or nonamer in membranes. Monomer in the soluble state.

The protein localises to the secreted. Its subcellular location is the nematocyst. It localises to the target cell membrane. Functionally, pore-forming protein that forms cations-selective hydrophilic pores of around 1 nm and causes cardiac stimulation and cytolysis. Pore formation is a multi-step process that involves specific recognition of membrane sphingomyelin (but neither cholesterol nor phosphatidylcholine) using aromatic rich region and adjacent phosphocholine (POC) binding site, firm binding to the membrane (mainly driven by hydrophobic interactions) accompanied by the transfer of the N-terminal region to the lipid-water interface and finally pore formation after oligomerization of monomers. Cytolytic effects include red blood cells hemolysis, platelet aggregation and lysis, cytotoxic and cytostatic effects on fibroblasts. Lethality in mammals has been ascribed to severe vasospasm of coronary vessels, cardiac arrhythmia, and inotropic effects. This is DELTA-actitoxin-Oor1b from Oulactis orientalis (Japan anemone).